The sequence spans 332 residues: Ketol-acid reductoisomerase (NADP(+)) (332 aa).

One can recognise a KARI N-terminal Rossmann domain in the interval 1-182 (MAVIYYDKDC…GSNRAGILET (182 aa)). NADP(+)-binding positions include 25 to 28 (YGAQ) and 83 to 86 (DTSQ). His108 is a catalytic residue. Gly134 serves as a coordination point for NADP(+). Residues 183 to 328 (TFAEETETDL…AELRSMMSWL (146 aa)) form the KARI C-terminal knotted domain. Mg(2+) contacts are provided by Asp191, Glu195, Glu227, and Glu231. Ser252 lines the substrate pocket.

The protein belongs to the ketol-acid reductoisomerase family. It depends on Mg(2+) as a cofactor.

It carries out the reaction (2R)-2,3-dihydroxy-3-methylbutanoate + NADP(+) = (2S)-2-acetolactate + NADPH + H(+). The catalysed reaction is (2R,3R)-2,3-dihydroxy-3-methylpentanoate + NADP(+) = (S)-2-ethyl-2-hydroxy-3-oxobutanoate + NADPH + H(+). The protein operates within amino-acid biosynthesis; L-isoleucine biosynthesis; L-isoleucine from 2-oxobutanoate: step 2/4. It participates in amino-acid biosynthesis; L-valine biosynthesis; L-valine from pyruvate: step 2/4. Functionally, involved in the biosynthesis of branched-chain amino acids (BCAA). Catalyzes an alkyl-migration followed by a ketol-acid reduction of (S)-2-acetolactate (S2AL) to yield (R)-2,3-dihydroxy-isovalerate. In the isomerase reaction, S2AL is rearranged via a Mg-dependent methyl migration to produce 3-hydroxy-3-methyl-2-ketobutyrate (HMKB). In the reductase reaction, this 2-ketoacid undergoes a metal-dependent reduction by NADPH to yield (R)-2,3-dihydroxy-isovalerate. The protein is Ketol-acid reductoisomerase (NADP(+)) of Dehalococcoides mccartyi (strain ATCC BAA-2100 / JCM 16839 / KCTC 5957 / BAV1).